The chain runs to 546 residues: Phosphomethylpyrimidine synthase (546 aa).

Residues Asn-145, Met-174, Tyr-203, His-239, 259-261 (SRG), 300-303 (DGLR), and Glu-339 each bind substrate. His-343 contributes to the Zn(2+) binding site. Position 366 (Tyr-366) interacts with substrate. His-407 provides a ligand contact to Zn(2+). Residues Cys-487, Cys-490, and Cys-495 each contribute to the [4Fe-4S] cluster site.

Belongs to the ThiC family. Requires [4Fe-4S] cluster as cofactor.

The enzyme catalyses 5-amino-1-(5-phospho-beta-D-ribosyl)imidazole + S-adenosyl-L-methionine = 4-amino-2-methyl-5-(phosphooxymethyl)pyrimidine + CO + 5'-deoxyadenosine + formate + L-methionine + 3 H(+). It functions in the pathway cofactor biosynthesis; thiamine diphosphate biosynthesis. Functionally, catalyzes the synthesis of the hydroxymethylpyrimidine phosphate (HMP-P) moiety of thiamine from aminoimidazole ribotide (AIR) in a radical S-adenosyl-L-methionine (SAM)-dependent reaction. The chain is Phosphomethylpyrimidine synthase from Mycobacterium marinum (strain ATCC BAA-535 / M).